The sequence spans 275 residues: NH(3)-dependent NAD(+) synthetase (275 aa).

46-53 (GISGGQDS) serves as a coordination point for ATP. Position 52 (Asp52) interacts with Mg(2+). Arg140 lines the deamido-NAD(+) pocket. Position 160 (Thr160) interacts with ATP. Residue Glu165 coordinates Mg(2+). Residues Lys173 and Asp180 each contribute to the deamido-NAD(+) site. Residues Lys189 and Thr211 each coordinate ATP. 260-261 (HK) provides a ligand contact to deamido-NAD(+).

It belongs to the NAD synthetase family. In terms of assembly, homodimer.

The catalysed reaction is deamido-NAD(+) + NH4(+) + ATP = AMP + diphosphate + NAD(+) + H(+). The protein operates within cofactor biosynthesis; NAD(+) biosynthesis; NAD(+) from deamido-NAD(+) (ammonia route): step 1/1. Functionally, catalyzes the ATP-dependent amidation of deamido-NAD to form NAD. Uses ammonia as a nitrogen source. This is NH(3)-dependent NAD(+) synthetase from Salmonella agona (strain SL483).